A 177-amino-acid chain; its full sequence is MNHPRSIAMLAALWLVVSVTSTPVRRSPDLEARRRSAIDRSMIRFGRSTLPVVPPAQPSFLQRYSAPQPAALTADDLMTFLRAYEEDYSSPVSKKSASFVRFGRDPSFIRFGRSVDEENSGYQAETNTYPQRRHRARNHFIRLGRDNELSESNDEDRYEVESERTKRSVVDPCNDCA.

An N-terminal signal peptide occupies residues 1-21 (MNHPRSIAMLAALWLVVSVTS). The propeptide occupies 22–32 (TPVRRSPDLEA). The residue at position 45 (Phe-45) is a Phenylalanine amide. Residues 47-93 (RSTLPVVPPAQPSFLQRYSAPQPAALTADDLMTFLRAYEEDYSSPVS) constitute a propeptide that is removed on maturation. Residues Phe-102 and Phe-111 each carry the phenylalanine amide modification. Positions 113–131 (RSVDEENSGYQAETNTYPQ) are excised as a propeptide. Position 143 is a leucine amide (Leu-143). Residues 145–177 (RDNELSESNDEDRYEVESERTKRSVVDPCNDCA) constitute a propeptide that is removed on maturation. A disordered region spans residues 145 to 177 (RDNELSESNDEDRYEVESERTKRSVVDPCNDCA). Residues 149 to 158 (LSESNDEDRY) are compositionally biased toward acidic residues. The segment covering 159–169 (EVESERTKRSV) has biased composition (basic and acidic residues).

This sequence belongs to the FARP (FMRFamide related peptide) family. Only expressed in the CNS and predominantly in the thoracic ganglia. Strongest expression is seen in two pairs of large neurons in each thoracic ganglion. These neurons are ventrolateral neurosecretory cells 1 and 2, they project their axons through transverse nerves into the periphery where axons from the prothoracic ganglion innervate the prothoracic gland.

It is found in the secreted. Its function is as follows. Regulates ecdysteroidogenesis by direct innervation of the prothoracic gland by reducing cAMP production via the receptor for myosuppressin. The neurons that innervate the prothoracic gland during the fifth instar are most active during days 0-4, after which they reduce and then peak again on day 6. Expression suppresses the biosynthesis of steroid hormones called ecdysteroids that elicit molting and metamorphosis. The polypeptide is FMRFamide-related peptides (Bombyx mori (Silk moth)).